We begin with the raw amino-acid sequence, 165 residues long: MYIEMVDETGQVSKEMLQQTQEILEFAAQKLGKEDKEMAVTFVTNERSHELNLEYRNTDRPTDVISLEYKPELEIAFDEEDLLENSELAEMMSEFDAYIGELFISIDKAHEQAEEYGHSFEREMGFLAVHGFLHINGYDHYTPEEEAEMFGLQEEILTAYGLTRQ.

Residues His-130, His-134, and His-140 each coordinate Zn(2+).

The protein belongs to the endoribonuclease YbeY family. It depends on Zn(2+) as a cofactor.

Its subcellular location is the cytoplasm. Its function is as follows. Single strand-specific metallo-endoribonuclease involved in late-stage 70S ribosome quality control and in maturation of the 3' terminus of the 16S rRNA. The chain is Endoribonuclease YbeY from Streptococcus pneumoniae serotype 4 (strain ATCC BAA-334 / TIGR4).